We begin with the raw amino-acid sequence, 398 residues long: Circumsporozoite protein (398 aa).

The first 23 residues, 1-23 (MKNFNLLAVSSILLVDLFRTQWG), serve as a signal peptide directing secretion. Residues 50–110 (AQVRQSASRG…AAAGEAGNNA (61 aa)) form a disordered region. Residues 66-93 (PKNEEGADKPKKKDEKQVEPKKPRENKL) show a composition bias toward basic and acidic residues. The tract at residues 81–89 (KQVEPKKPR) is required for the binding to heparan sulfate proteoglycans (HSPGs) on the surface of host hepatocytes. The tract at residues 92–96 (KLKQP) is region I; contains the proteolytic cleavage site. Repeat copies occupy residues 97–105 (AGNNAAAGE), 106–114 (AGNNAAAGE), 115–123 (AGNNAAAGE), 124–132 (AGNNAAAGE), 133–141 (AGNNAAAGE), 142–150 (AGNNAAAGE), 151–159 (AGNNAAGGA), 160–168 (AGNNAAGGE), 169–177 (AGNNAAGGA), 178–186 (AGNNAAAGE), 187–195 (AGNNAAGGE), 196–204 (AGNNAAAGE), 205–213 (AGNNAAGGA), 214–222 (AGNNAAAGE), 223–231 (AGNNAAAGA), 232–240 (AGNNAAAGA), 241–257 (AGNN…GAGR), 258–274 (AGNN…GAGR), and 275–291 (AGNN…GAGG). The segment covering 97–110 (AGNNAAAGEAGNNA) has biased composition (low complexity). The interval 97-240 (AGNNAAAGEA…AAGNNAAAGA (144 aa)) is 16 X 9 AA tandem repeats of A-G-N-N-A-A-[AG]-G-[EA]. Positions 241–291 (AGNNAAAGEAGAGGAGRAGNNAAAGEAGAGGAGRAGNNAAAGEAGAGGAGG) are 3 X 17 AA tandem repeats of A-G-N-N-A-A-A-G-E-A-G-A-G-G-A-G-[RG]. Residues 248–310 (GEAGAGGAGR…AGQGQNNGGA (63 aa)) form a disordered region. The segment covering 284-293 (AGAGGAGGNA) has biased composition (gly residues). One can recognise a TSP type-1 domain in the interval 324–376 (KIRSTIGVEWSPCSVTCGKGVRMRRKVNAANKKPEELDANDLETEVCTMDKCA). 2 disulfides stabilise this stretch: C336–C370 and C340–C375. O-linked (Fuc) threonine glycosylation is present at T339. The GPI-anchor amidated cysteine moiety is linked to residue C375. Positions 376-398 (AGIFNVVSNSLGLVILLVLALFN) are cleaved as a propeptide — removed in mature form.

The protein belongs to the plasmodium circumsporozoite protein family. During host cell invasion, proteolytically cleaved at the cell membrane in the region I by a papain-like cysteine protease of parasite origin. Cleavage is triggered by the sporozoite contact with highly sulfated heparan sulfate proteoglycans (HSPGs) present on the host hepatocyte cell surface. Cleavage exposes the TSP type-1 (TSR) domain and is required for productive invasion of host hepatocytes but not for adhesion to the host cell membrane. Cleavage is dispensable for sporozoite development in the oocyst, motility and for traversal of host and vector cells. In terms of processing, O-glycosylated; maybe by POFUT2.

It is found in the cell membrane. Its subcellular location is the cytoplasm. Functionally, essential sporozoite protein. In the mosquito vector, required for sporozoite development in the oocyst, migration through the vector hemolymph and entry into the vector salivary glands. In the vertebrate host, required for sporozoite migration through the host dermis and infection of host hepatocytes. Binds to highly sulfated heparan sulfate proteoglycans (HSPGs) on the surface of host hepatocytes. In the vertebrate host, binds to highly sulfated heparan sulfate proteoglycans (HSPGs) on the surface of host hepatocytes and is required for sporozoite invasion of the host hepatocytes. The polypeptide is Circumsporozoite protein (Plasmodium cynomolgi (strain Ceylon)).